A 92-amino-acid polypeptide reads, in one-letter code: MLVMNLQYFAHKKGVGSSRNGRDSEAKRLGVKRSDGQAVLSGNILVRQRGTKIHPGNNVGLGSDDTLFALIDGVVKFERKGRDKKQVSVYAV.

The propeptide occupies 1–9; sequence MLVMNLQYF.

The protein belongs to the bacterial ribosomal protein bL27 family. In terms of processing, the N-terminus is cleaved by ribosomal processing cysteine protease Prp.

This is Large ribosomal subunit protein bL27 from Heliobacterium modesticaldum (strain ATCC 51547 / Ice1).